A 680-amino-acid chain; its full sequence is WD repeat-containing protein 48 homolog (680 aa).

WD repeat units lie at residues Gln26 to Tyr65, His71 to Thr110, Thr113 to Ala152, Gly164 to Lys203, Gly206 to Thr245, Val248 to Leu287, Glu290 to Leu329, and Lys350 to Gln389. A disordered region spans residues Glu592–Ser616.

This sequence belongs to the WD repeat WDR48 family. Catalytic component of the Usp12-46 deubiquitylase complex consisting of Usp12-46, Wdr20 and Uaf1; regulatory subunit that, together wtih Wdr20, stabilizes Usp12-46. The Usp12-46 deubiquitylase complex associates with arr/arrow; the interaction leads to deubiquitination and stabilization of arr/arrow.

Its function is as follows. Regulatory component of the Usp12-46 deubiquitylase complex. activates deubiquitination by increasing the catalytic turnover without increasing the affinity of deubiquitinating enzymes for the substrate. The complex deubiquitylates the wg/wingless-signaling receptor arr/arrow, which stabilizes the receptor and increases its concentration at the cell surface; this enhances the sensitivity of cells to wg/wingless-signal stimulation. This increases the amplitude and spatial range of the signaling response to the wg/wingless morphogen gradient, facilitating the precise concentration-dependent regulation of its target genes. Together with Wdr20 and Usp12-46 required for wg/wingless-mediated signaling in the wing imaginal disc and for wg/wingless-dependent regulation of intestinal stem cell proliferation. The protein is WD repeat-containing protein 48 homolog of Drosophila sechellia (Fruit fly).